The primary structure comprises 1361 residues: Cell migration-inducing and hyaluronan-binding protein (1361 aa).

Positions Met1–Ser30 are cleaved as a signal peptide. The G8 domain occupies Gln44–Lys166. N-linked (GlcNAc...) asparagine glycosylation is found at Asn119, Asn165, Asn312, Asn370, and Asn420. Positions Gly176–Ser317 constitute a GG-type lectin 1 domain. Residues Ala295–Thr591 are necessary for its endoplasmic reticulum (ER) retention and interaction with HSPA5. PbH1 repeat units lie at residues Asp572–Gly594, Ser595–Asp617, Ile719–Asn741, and Gly798–Ser819. N-linked (GlcNAc...) asparagine glycans are attached at residues Asn889 and Asn921. The GG-type lectin 2 domain occupies Asn1227–Leu1361.

The protein belongs to the CEMIP family. In terms of assembly, interacts with EPHA2 and ITPR3. Interacts with HSPA5/BIP; the interaction induces calcium leakage from the endoplasmic reticulum and cell migration. Interacts with clathrin heavy chain/CLTC. Post-translationally, N-glycosylated; glycosylation is not necessary for HA-binding. Expressed in dermal and in synovial fibroblasts. Strongly expressed in gastric cancers compared with the paired normal tissues. Strongly expressed in both ductal carcinoma and invasive breast cancer cells compared with benign epithelial cells (at protein level). Strongly expressed in brain, placenta, prostate, breast, lung and testis. Expressed in fibroblasts, epithelial cells and cancer cells. In ear, it is specifically expressed in inner ear. Expressed in cochlea and vestibule tissues. Strongly expressed in gastric cancers compared with the paired normal tissues. Strongly expressed in colon adenocarcinomas compared with normal colonic mucosas. Strongly expressed in breast cancer as compared to normal breast tissue.

Its subcellular location is the nucleus. It is found in the cytoplasm. It localises to the endoplasmic reticulum. The protein localises to the cell membrane. The protein resides in the membrane. Its subcellular location is the clathrin-coated pit. It is found in the secreted. It catalyses the reaction Random hydrolysis of (1-&gt;4)-linkages between N-acetyl-beta-D-glucosamine and D-glucuronate residues in hyaluronate.. Its activity is regulated as follows. Activity is up-regulated by histamine. Functionally, mediates depolymerization of hyaluronic acid (HA) via the cell membrane-associated clathrin-coated pit endocytic pathway. Binds to hyaluronic acid. Hydrolyzes high molecular weight hyaluronic acid to produce an intermediate-sized product, a process that may occur through rapid vesicle endocytosis and recycling without intracytoplasmic accumulation or digestion in lysosomes. Involved in hyaluronan catabolism in the dermis of the skin and arthritic synovium. Positively regulates epithelial-mesenchymal transition (EMT), and hence tumor cell growth, invasion and cancer dissemination. In collaboration with HSPA5/BIP, promotes cancer cell migration in a calcium and PKC-dependent manner. May be involved in hearing. The protein is Cell migration-inducing and hyaluronan-binding protein of Homo sapiens (Human).